We begin with the raw amino-acid sequence, 883 residues long: Coatomer subunit gamma (883 aa).

The interval 1–25 is disordered; the sequence is MNYFSLTSHKKHRGHPSAGPSNAYQ. HEAT repeat units lie at residues 69 to 106, 292 to 329, 331 to 364, 365 to 401, 404 to 439, and 476 to 513; these read REATDCFFAMTKLFQSKDVVLRRMVYLGIKELSSIAED, RMLSPAFSILQLFCSSPKATLRFAAVRTLNKVAMTHPA, VTTCNLDLEGLITDSNRSVATLAITTLLKTGAES, SVERLMKQISTFVAEISDEFKVVVVQAICALCTKYPR, TVLMNFLSGMLREEGGLEYKTSIVDTIITIIEENAD, and ATPSKYIRFIYNRVILESPIVRAAAVTAMAQFGASCPA.

This sequence belongs to the COPG family. Oligomeric complex that consists of at least the alpha, beta, beta', gamma, delta, epsilon and zeta subunits. In terms of tissue distribution, expressed in ovary, testis, testis tip, young spermatocytes, germ cells and follicle cells. Up-regulated expression within centrally to posteriorly located germarial cysts and in migrating follicle cells. Widespread expression in imaginal disks including eye-antennal disk, wing disk, third leg and haltere disk.

It is found in the cytoplasm. It localises to the golgi apparatus membrane. The protein resides in the cytoplasmic vesicle. The protein localises to the COPI-coated vesicle membrane. Its subcellular location is the endoplasmic reticulum. Its function is as follows. The coatomer is a cytosolic protein complex that binds to dilysine motifs and reversibly associates with Golgi non-clathrin-coated vesicles, which further mediate biosynthetic protein transport from the ER, via the Golgi up to the trans Golgi network. Coatomer complex is required for budding from Golgi membranes, and is essential for the retrograde Golgi-to-ER transport of dilysine-tagged proteins. Required for limiting lipid storage in lipid droplets. Involved in the expansion of luminal extracellular matrices and apical membrane during tubulogenesis. Required in the tracheal epithelium for luminal protein secretion and diametric tube growth. In salivary glands, required for deposition of O-glycans and luminal extracellular matrix assembly. Required for epidermal morphogenesis and cuticle development. This is Coatomer subunit gamma from Drosophila melanogaster (Fruit fly).